The sequence spans 161 residues: Mediator of RNA polymerase II transcription subunit 10 (161 aa).

It belongs to the Mediator complex subunit 10 family. As to quaternary structure, component of the Mediator complex.

Its subcellular location is the nucleus. Its function is as follows. Component of the Mediator complex, a coactivator involved in the regulated transcription of nearly all RNA polymerase II-dependent genes. Mediator functions as a bridge to convey information from gene-specific regulatory proteins to the basal RNA polymerase II transcription machinery. Mediator is recruited to promoters by direct interactions with regulatory proteins and serves as a scaffold for the assembly of a functional preinitiation complex with RNA polymerase II and the general transcription factors. The protein is Mediator of RNA polymerase II transcription subunit 10 (NUT2) of Kluyveromyces lactis (strain ATCC 8585 / CBS 2359 / DSM 70799 / NBRC 1267 / NRRL Y-1140 / WM37) (Yeast).